The following is a 319-amino-acid chain: 4-diphosphocytidyl-2-C-methyl-D-erythritol kinase (319 aa).

Residue lysine 18 is part of the active site. 103 to 113 serves as a coordination point for ATP; it reads PIGAGLAGGST. Residue aspartate 145 is part of the active site.

It belongs to the GHMP kinase family. IspE subfamily.

The catalysed reaction is 4-CDP-2-C-methyl-D-erythritol + ATP = 4-CDP-2-C-methyl-D-erythritol 2-phosphate + ADP + H(+). Its pathway is isoprenoid biosynthesis; isopentenyl diphosphate biosynthesis via DXP pathway; isopentenyl diphosphate from 1-deoxy-D-xylulose 5-phosphate: step 3/6. In terms of biological role, catalyzes the phosphorylation of the position 2 hydroxy group of 4-diphosphocytidyl-2C-methyl-D-erythritol. This Prochlorococcus marinus (strain NATL1A) protein is 4-diphosphocytidyl-2-C-methyl-D-erythritol kinase.